A 100-amino-acid polypeptide reads, in one-letter code: RxLR effector protein SFI8 (100 aa).

The first 22 residues, Met1–Ala22, serve as a signal peptide directing secretion. The short motif at Arg43 to Arg57 is the RxLR-dEER element. A Calmodulin-binding motif motif is present at residues Lys78–Lys82.

Belongs to the RxLR effector family. Interacts with the host calmodulin.

It is found in the secreted. Its subcellular location is the host nucleus. The protein localises to the host cytoplasm. Functionally, effector that suppresses flg22-induced post-translational MAP kinase activation both tomato and Arabidopsis. The perception of highly conserved pathogen- or microbe-associated molecular patterns (PAMPs/MAMPs), such as flg22, triggers converging signaling pathways recruiting MAP kinase cascades and inducing transcriptional re-programming, yielding a generic antimicrobial response. Associates with calmodulin to interfere with plant defense-associated calcium signaling in hosts. This Phytophthora infestans (strain T30-4) (Potato late blight agent) protein is RxLR effector protein SFI8.